We begin with the raw amino-acid sequence, 1461 residues long: MPPFYIVITFLLSTVFRISQSVHHHLNEEELKQVFGVSNKHDVPEYSLIEATRHPLKNGNLKMKFTAWNDTYHLNLRKNSRIVSPHIISVVRHGDDDVTTYAGLRDYEQCHYQGEVKSHGNMKAAISDCGALMGSIVMEDHFLVLQTLPKRVHHLQKERHLVYKRSAGLLTNAESKIREEITRLQEEQESFCDTSEQLDDPAMTIPAHLHFNYTIPTSAQLDSSFIFPNMDPITLEIGLFLDSKLFEHFEREYIQDAEQHLLEFSLALINNVHVLYQQDTLTPNLDIVIVRYEMWRTQPSALSTGVHKNGQAQSLLDAFCRYQAHMNPGTDLTDMNHYDHGVLLTGYDIYHTTTSVAGVAPVARMCDPLFACSLVEGLHLGRSFVLAHEMGHNMGMVHDGVQNQCNKGCCLMSAVNGAGKTTWSDCSVREFNAFLLQLDESGRGNCLRDASPGLISTNHLSDLRLPGQRFTADQQCSYFWGRDYKVEIPNGKAMDDICRILWCGNSGSTISTAHPALEGSWCGANKWCHKGQCTHWTFGLTPVPIDGEWSEWGGAEKGCPIQQCAVSGSITVQGQHRDCVNPAPNNGGKTCEGANIRGIVCGATSSNCLGFTREEFGNKICSSIKYDPHKPDQQLTGEGFEHSTQPCRVWCHLIGSELIRNKGQFPDGTPCGFDAYCVGGQCLALSCDNKALVEQPEDCPRIEGRSVHQWEEWSSWSECSVSCGLGGREVRERKCSSGRKCQGVSEESRPCEGVLRDCEEFGEWKEWGSCSEKCALGVQKRFRPCLTDQCSSKHLQEERPCDNEGCWTNWDEWSSCSQSCGGGRRYRIRKCLDDKCDGDDLEKESCNTQKCISQSWGDWLPCSVSCGIGFQIRERLCDGELCATANKQARTCNQQQCPSAFSLSVWSEWGEWTTCSATCGEGLQSRERSCRRGSCTEDDASQTRRCVNGPCEHSYLTWSEWTTCETCSSFDSRKRIAKCDGTTENCQDKIDEETCDIACLREKHSFGPISPRRPKLITSNDLRKAFGRPLLPIESIHSEKWSEWGPCSVTCGSGRRVRTRGCQEASCPEQHIQTEECNLNSCLELFIWSDWSSCSKSCGQDGIQTRQKLCLFNNAECSSYAESRRCKDLPSCSSISSGRTISENGFDAPRWSEWSSWSACSCFSLTSTRRRFCQVVDPTVQGFCAGAILEQIPCAPGSCSPSAGGWSLWSEWSSCSKDCGDTGHQIRNRMCSEPIPSNRGAYCSGYSFDQRPCVMDNVCSDEKVDGGWTDWTAWSECTDYCRNGHRSRTRFCANPKPSQGGAQCTGSDFELNPCFDPARCHLRDGGWSTWSDWTPCSASCGFGVQTRDRSCSSPEPKGGQSCSGLAHQTSLCDLPACDHESDGEWSAWNEWSGCMGNCGIGTRTRVRACVSPPVSDGGQPCFGRSSEITECRQSPSTALCSSFITSSHLADGYFIDTDQQQ.

The N-terminal stretch at 1 to 21 is a signal peptide; sequence MPPFYIVITFLLSTVFRISQS. Positions 22–163 are excised as a propeptide; that stretch reads VHHHLNEEEL…HLQKERHLVY (142 aa). Asn69 carries N-linked (GlcNAc...) asparagine glycosylation. The Cysteine switch motif lies at 190–197; the sequence is SFCDTSEQ. An N-linked (GlcNAc...) asparagine glycan is attached at Asn212. Residues 233–435 form the Peptidase M12B domain; that stretch reads ITLEIGLFLD…CSVREFNAFL (203 aa). His388 lines the Zn(2+) pocket. Glu389 is a catalytic residue. Residues His392 and His398 each contribute to the Zn(2+) site. Residues Cys405 and Cys410 are joined by a disulfide bond. Residues 464–546 enclose the Disintegrin domain; that stretch reads RLPGQRFTAD…TFGLTPVPID (83 aa). 13 consecutive TSP type-1 domains span residues 708 to 759, 761 to 802, 804 to 852, 853 to 898, 903 to 952, 955 to 1000, 1035 to 1083, 1087 to 1133, 1148 to 1200, 1203 to 1260, 1265 to 1321, 1324 to 1378, and 1382 to 1435; these read HQWE…RDCE, FGEW…RPCD, EGCW…QKCI, SQSW…QQCP, LSVW…GPCE, YLTW…IACL, SIHS…NSCL, IWSD…PSCS, APRW…GSCS, AGGW…NVCS, DGGW…ARCH, DGGW…PACD, and DGEW…RQSP. 3 disulfide bridges follow: Cys719–Cys751, Cys723–Cys758, and Cys735–Cys741. 6 cysteine pairs are disulfide-bonded: Cys816–Cys846, Cys820–Cys851, Cys831–Cys836, Cys862–Cys892, Cys866–Cys897, and Cys877–Cys882. 3 cysteine pairs are disulfide-bonded: Cys1047/Cys1077, Cys1051/Cys1082, and Cys1062/Cys1067. Cystine bridges form between Cys1160-Cys1194, Cys1162-Cys1199, Cys1173-Cys1184, Cys1215-Cys1253, Cys1219-Cys1259, Cys1231-Cys1243, Cys1277-Cys1314, Cys1281-Cys1320, Cys1292-Cys1304, Cys1336-Cys1372, Cys1340-Cys1377, and Cys1351-Cys1362.

Zn(2+) serves as cofactor. In terms of tissue distribution, in hermaphrodites, expressed in the vulva, head ganglia, ventral nerve cord and amphid neurons. Expressed in the rays of the male tail.

The protein localises to the secreted. Plays a role in ray morphogenesis in the male tail, probably by remodeling the extracellular matrix (ECM) in the cuticle. The protein is A disintegrin and metalloproteinase with thrombospondin motifs adt-1 of Caenorhabditis elegans.